Consider the following 58-residue polypeptide: Potassium channel toxin alpha-KTx 16.6 (58 aa).

The first 22 residues, 1–22 (MKILSVLLIALIICSINICSEA), serve as a signal peptide directing secretion. Intrachain disulfides connect C29/C50, C35/C55, and C39/C57.

The protein belongs to the short scorpion toxin superfamily. Potassium channel inhibitor family. Alpha-KTx 16 subfamily. As to expression, expressed by the venom gland.

The protein resides in the secreted. Inhibits potassium channel. This chain is Potassium channel toxin alpha-KTx 16.6, found in Buthus israelis (Israeli scorpion).